The primary structure comprises 401 residues: Exodeoxyribonuclease 7 large subunit (401 aa).

This sequence belongs to the XseA family. In terms of assembly, heterooligomer composed of large and small subunits.

It is found in the cytoplasm. It catalyses the reaction Exonucleolytic cleavage in either 5'- to 3'- or 3'- to 5'-direction to yield nucleoside 5'-phosphates.. Functionally, bidirectionally degrades single-stranded DNA into large acid-insoluble oligonucleotides, which are then degraded further into small acid-soluble oligonucleotides. The polypeptide is Exodeoxyribonuclease 7 large subunit (Syntrophotalea carbinolica (strain DSM 2380 / NBRC 103641 / GraBd1) (Pelobacter carbinolicus)).